The chain runs to 706 residues: Ribosomal RNA large subunit methyltransferase K/L (706 aa).

Residues 43–154 form the THUMP domain; the sequence is LMYQSLLWSR…RDMASVALDL (112 aa).

It belongs to the methyltransferase superfamily. RlmKL family.

The protein resides in the cytoplasm. The catalysed reaction is guanosine(2445) in 23S rRNA + S-adenosyl-L-methionine = N(2)-methylguanosine(2445) in 23S rRNA + S-adenosyl-L-homocysteine + H(+). It carries out the reaction guanosine(2069) in 23S rRNA + S-adenosyl-L-methionine = N(2)-methylguanosine(2069) in 23S rRNA + S-adenosyl-L-homocysteine + H(+). Functionally, specifically methylates the guanine in position 2445 (m2G2445) and the guanine in position 2069 (m7G2069) of 23S rRNA. This Yersinia pseudotuberculosis serotype IB (strain PB1/+) protein is Ribosomal RNA large subunit methyltransferase K/L.